A 380-amino-acid polypeptide reads, in one-letter code: Ribosomal RNA small subunit methyltransferase, mitochondrial (380 aa).

Residues 1–26 constitute a mitochondrion transit peptide; that stretch reads MILRLKDQTLIKINSTRSYLSSLVFR. S-adenosyl-L-methionine is bound by residues H70, L72, G97, E118, D146, and N161.

Belongs to the class I-like SAM-binding methyltransferase superfamily. rRNA adenine N(6)-methyltransferase family.

The protein localises to the mitochondrion. It carries out the reaction adenosine(1914)/adenosine(1915) in 18S rRNA + 4 S-adenosyl-L-methionine = N(6)-dimethyladenosine(1914)/N(6)-dimethyladenosine(1915) in 18S rRNA + 4 S-adenosyl-L-homocysteine + 4 H(+). N6-adenine methyltransferase which modifies the AA dinucleotide at the plant mitochondrial 18S rRNA nucleotides A1914 and A1915. Not active as mitochondrial transcription factor. In Arabidopsis thaliana (Mouse-ear cress), this protein is Ribosomal RNA small subunit methyltransferase, mitochondrial.